Consider the following 154-residue polypeptide: Ribosomal RNA large subunit methyltransferase H (154 aa).

S-adenosyl-L-methionine is bound by residues Gly103 and 122-127; that span reads FSKLTF.

Belongs to the RNA methyltransferase RlmH family. In terms of assembly, homodimer.

The protein localises to the cytoplasm. The catalysed reaction is pseudouridine(1915) in 23S rRNA + S-adenosyl-L-methionine = N(3)-methylpseudouridine(1915) in 23S rRNA + S-adenosyl-L-homocysteine + H(+). In terms of biological role, specifically methylates the pseudouridine at position 1915 (m3Psi1915) in 23S rRNA. This Caldicellulosiruptor bescii (strain ATCC BAA-1888 / DSM 6725 / KCTC 15123 / Z-1320) (Anaerocellum thermophilum) protein is Ribosomal RNA large subunit methyltransferase H.